Here is a 99-residue protein sequence, read N- to C-terminus: Large ribosomal subunit protein eL30 (99 aa).

This sequence belongs to the eukaryotic ribosomal protein eL30 family. As to quaternary structure, part of the 50S ribosomal subunit.

The polypeptide is Large ribosomal subunit protein eL30 (Pyrococcus furiosus (strain ATCC 43587 / DSM 3638 / JCM 8422 / Vc1)).